A 251-amino-acid chain; its full sequence is tRNA1(Val) (adenine(37)-N6)-methyltransferase (251 aa).

Belongs to the methyltransferase superfamily. tRNA (adenine-N(6)-)-methyltransferase family.

It is found in the cytoplasm. It carries out the reaction adenosine(37) in tRNA1(Val) + S-adenosyl-L-methionine = N(6)-methyladenosine(37) in tRNA1(Val) + S-adenosyl-L-homocysteine + H(+). Specifically methylates the adenine in position 37 of tRNA(1)(Val) (anticodon cmo5UAC). The protein is tRNA1(Val) (adenine(37)-N6)-methyltransferase of Yersinia enterocolitica serotype O:8 / biotype 1B (strain NCTC 13174 / 8081).